The primary structure comprises 123 residues: MNKLFLFTLLVTLWSVKGFTYEEKKQAFCSLPKVYQIRLLDCLIDRGSENDKEVVNAVYKCMNEHSDVDGKADAMMKAVCNEEIFATNRNLILCMLVNPPKLEHSERTNDDDLEAVKYCLVNG.

A signal peptide spans 1 to 18 (MNKLFLFTLLVTLWSVKG).

In terms of processing, contains 3 disulfide bonds. Expressed by the venom gland.

It localises to the secreted. The sequence is that of Venom protein 29 from Lychas mucronatus (Chinese swimming scorpion).